We begin with the raw amino-acid sequence, 241 residues long: Triosephosphate isomerase (241 aa).

A substrate-binding site is contributed by 8-10 (NWK). Histidine 93 acts as the Electrophile in catalysis. Glutamate 163 functions as the Proton acceptor in the catalytic mechanism. Residues glycine 169, serine 205, and 226–227 (GG) contribute to the substrate site.

This sequence belongs to the triosephosphate isomerase family. Homodimer.

The protein resides in the cytoplasm. It catalyses the reaction D-glyceraldehyde 3-phosphate = dihydroxyacetone phosphate. Its pathway is carbohydrate biosynthesis; gluconeogenesis. It participates in carbohydrate degradation; glycolysis; D-glyceraldehyde 3-phosphate from glycerone phosphate: step 1/1. Functionally, involved in the gluconeogenesis. Catalyzes stereospecifically the conversion of dihydroxyacetone phosphate (DHAP) to D-glyceraldehyde-3-phosphate (G3P). In Bdellovibrio bacteriovorus (strain ATCC 15356 / DSM 50701 / NCIMB 9529 / HD100), this protein is Triosephosphate isomerase.